We begin with the raw amino-acid sequence, 299 residues long: MINSIRIGTRNSTLALIQTNLVIEQIKQIFPDINCEIVPIITSGDLIQNKPLYDIGGKALFLKEIEQALLDKKIDLAVHSLKDIPGKIPVELVIAAVLEREDPRDVLVCLNYQSIETLPQNAVIGSSAVRRKAFIKKIRPDLNIKVFRGNVDSRIKKLMTGEVDAIILSYAGLKRLNVFNQKYCHLIEYSKMLPCIGQGVIAVEIRKDDNAMFNICSQINHLPTFELIKPERAFLEYLDANCSTPIAAYAQYLDAYNIQIDFMLGNLDCTKIIFQTEITNIKTSKICGIKAAKMMLAQQ.

Cys-242 is modified (S-(dipyrrolylmethanemethyl)cysteine).

The protein belongs to the HMBS family. In terms of assembly, monomer. Dipyrromethane is required as a cofactor.

It carries out the reaction 4 porphobilinogen + H2O = hydroxymethylbilane + 4 NH4(+). Its pathway is porphyrin-containing compound metabolism; protoporphyrin-IX biosynthesis; coproporphyrinogen-III from 5-aminolevulinate: step 2/4. Tetrapolymerization of the monopyrrole PBG into the hydroxymethylbilane pre-uroporphyrinogen in several discrete steps. This is Porphobilinogen deaminase (hemC) from Rickettsia prowazekii (strain Madrid E).